Here is a 761-residue protein sequence, read N- to C-terminus: 1,4-alpha-glucan branching enzyme GlgB (761 aa).

Asp-431 functions as the Nucleophile in the catalytic mechanism. Residue Glu-484 is the Proton donor of the active site.

The protein belongs to the glycosyl hydrolase 13 family. GlgB subfamily. In terms of assembly, monomer.

It catalyses the reaction Transfers a segment of a (1-&gt;4)-alpha-D-glucan chain to a primary hydroxy group in a similar glucan chain.. Its pathway is glycan biosynthesis; glycogen biosynthesis. Catalyzes the formation of the alpha-1,6-glucosidic linkages in glycogen by scission of a 1,4-alpha-linked oligosaccharide from growing alpha-1,4-glucan chains and the subsequent attachment of the oligosaccharide to the alpha-1,6 position. The sequence is that of 1,4-alpha-glucan branching enzyme GlgB from Synechococcus sp. (strain WH7803).